We begin with the raw amino-acid sequence, 231 residues long: GrpE protein homolog, mitochondrial (231 aa).

Positions 49–71 (SEKAGEKAEEKAEEQNLSAEEQK) are disordered.

This sequence belongs to the GrpE family. Component of the PAM complex, at least composed of mtHsp70, MGE1, TIM44, PAM16, PAM17 and PAM18.

It is found in the mitochondrion matrix. In terms of biological role, essential component of the PAM complex, a complex required for the translocation of transit peptide-containing proteins from the inner membrane into the mitochondrial matrix in an ATP-dependent manner. Seems to control the nucleotide-dependent binding of SSC1 to substrate proteins. This chain is GrpE protein homolog, mitochondrial (mge1), found in Candida glabrata (strain ATCC 2001 / BCRC 20586 / JCM 3761 / NBRC 0622 / NRRL Y-65 / CBS 138) (Yeast).